The chain runs to 234 residues: Enolase-phosphatase E1 (234 aa).

2 residues coordinate Mg(2+): Asp-13 and Glu-15. Substrate-binding positions include 127–128 (SS) and Lys-164. Residue Asp-191 participates in Mg(2+) binding.

Belongs to the HAD-like hydrolase superfamily. MasA/MtnC family. Monomer. Requires Mg(2+) as cofactor.

The protein resides in the cytoplasm. The protein localises to the nucleus. It catalyses the reaction 5-methylsulfanyl-2,3-dioxopentyl phosphate + H2O = 1,2-dihydroxy-5-(methylsulfanyl)pent-1-en-3-one + phosphate. It participates in amino-acid biosynthesis; L-methionine biosynthesis via salvage pathway; L-methionine from S-methyl-5-thio-alpha-D-ribose 1-phosphate: step 3/6. Its pathway is amino-acid biosynthesis; L-methionine biosynthesis via salvage pathway; L-methionine from S-methyl-5-thio-alpha-D-ribose 1-phosphate: step 4/6. In terms of biological role, bifunctional enzyme that catalyzes the enolization of 2,3-diketo-5-methylthiopentyl-1-phosphate (DK-MTP-1-P) into the intermediate 2-hydroxy-3-keto-5-methylthiopentenyl-1-phosphate (HK-MTPenyl-1-P), which is then dephosphorylated to form the acireductone 1,2-dihydroxy-3-keto-5-methylthiopentene (DHK-MTPene). The chain is Enolase-phosphatase E1 from Podospora anserina (strain S / ATCC MYA-4624 / DSM 980 / FGSC 10383) (Pleurage anserina).